The sequence spans 628 residues: Biosynthetic arginine decarboxylase (628 aa).

An N6-(pyridoxal phosphate)lysine modification is found at lysine 99. 279–289 (VDVGGGLGIDY) lines the substrate pocket.

Belongs to the Orn/Lys/Arg decarboxylase class-II family. SpeA subfamily. Requires Mg(2+) as cofactor. The cofactor is pyridoxal 5'-phosphate.

It carries out the reaction L-arginine + H(+) = agmatine + CO2. It participates in amine and polyamine biosynthesis; agmatine biosynthesis; agmatine from L-arginine: step 1/1. In terms of biological role, catalyzes the biosynthesis of agmatine from arginine. The polypeptide is Biosynthetic arginine decarboxylase (Xylella fastidiosa (strain M12)).